A 120-amino-acid chain; its full sequence is Large ribosomal subunit protein bL20 (120 aa).

The protein belongs to the bacterial ribosomal protein bL20 family.

Functionally, binds directly to 23S ribosomal RNA and is necessary for the in vitro assembly process of the 50S ribosomal subunit. It is not involved in the protein synthesizing functions of that subunit. This Ligilactobacillus salivarius (strain UCC118) (Lactobacillus salivarius) protein is Large ribosomal subunit protein bL20.